The chain runs to 187 residues: Capsid protein VP10 (187 aa).

A disulfide bridge links C45 with C51.

It is found in the virion. In terms of biological role, VP10 self-assembles, together with capsid protein VP4, to form an icosahedral caspid of 87 nm in diameter, with a T=43 symmetry and composed of 420 hexamers and 12 pentamers. VP4 proteins arrange into hexons, while VP10 proteins form the pentameric densities located at the 5-fold axes in the virion. The stoichiometry of VP4:VP10 is 42:1. The protein is Capsid protein VP10 of Sulfolobus polyhedral virus 1 (SPV1).